Here is a 102-residue protein sequence, read N- to C-terminus: NAD(P)H-quinone oxidoreductase subunit 4L (102 aa).

The next 3 helical transmembrane spans lie at 4–24 (LQFF…GLIV), 33–53 (MSIE…SNFV), and 65–85 (VFVI…VLGI).

The protein belongs to the complex I subunit 4L family. NDH-1 can be composed of about 15 different subunits; different subcomplexes with different compositions have been identified which probably have different functions.

The protein resides in the cellular thylakoid membrane. The catalysed reaction is a plastoquinone + NADH + (n+1) H(+)(in) = a plastoquinol + NAD(+) + n H(+)(out). It catalyses the reaction a plastoquinone + NADPH + (n+1) H(+)(in) = a plastoquinol + NADP(+) + n H(+)(out). NDH-1 shuttles electrons from an unknown electron donor, via FMN and iron-sulfur (Fe-S) centers, to quinones in the respiratory and/or the photosynthetic chain. The immediate electron acceptor for the enzyme in this species is believed to be plastoquinone. Couples the redox reaction to proton translocation, and thus conserves the redox energy in a proton gradient. Cyanobacterial NDH-1 also plays a role in inorganic carbon-concentration. The polypeptide is NAD(P)H-quinone oxidoreductase subunit 4L (Synechococcus sp. (strain JA-3-3Ab) (Cyanobacteria bacterium Yellowstone A-Prime)).